Here is a 251-residue protein sequence, read N- to C-terminus: MNLNSIPAFQDNYIWVLTNDEGRCVIVDPGEAAPVLKAIAEHKWMPEAIFLTHHHHDHVGGVKELLQHFPQMTVYGPAETQDKGATHLVDDGDTIRVLGEKFTLFATPGHTLGHVCYFSHPYLFCGDTLFSGGCGRLFEGTPSQMYQSLMKINSLPDDTLICCAHEYTLANIKFALSILPHDSFINEYYRKVKELRVKKQMTLPVILKNERKINLFLRTEDIDLINEINKETILQQPEARFAWLRSKKDTF.

Positions 53, 55, 57, 58, 110, 127, and 165 each coordinate Zn(2+).

It belongs to the metallo-beta-lactamase superfamily. Glyoxalase II family. As to quaternary structure, monomer. It depends on Zn(2+) as a cofactor.

The enzyme catalyses an S-(2-hydroxyacyl)glutathione + H2O = a 2-hydroxy carboxylate + glutathione + H(+). It participates in secondary metabolite metabolism; methylglyoxal degradation; (R)-lactate from methylglyoxal: step 2/2. Functionally, thiolesterase that catalyzes the hydrolysis of S-D-lactoyl-glutathione to form glutathione and D-lactic acid. In Salmonella paratyphi A (strain ATCC 9150 / SARB42), this protein is Hydroxyacylglutathione hydrolase.